Consider the following 950-residue polypeptide: Glycine dehydrogenase (decarboxylating) (950 aa).

Residue lysine 698 is modified to N6-(pyridoxal phosphate)lysine.

It belongs to the GcvP family. The glycine cleavage system is composed of four proteins: P, T, L and H. It depends on pyridoxal 5'-phosphate as a cofactor.

It catalyses the reaction N(6)-[(R)-lipoyl]-L-lysyl-[glycine-cleavage complex H protein] + glycine + H(+) = N(6)-[(R)-S(8)-aminomethyldihydrolipoyl]-L-lysyl-[glycine-cleavage complex H protein] + CO2. The glycine cleavage system catalyzes the degradation of glycine. The P protein binds the alpha-amino group of glycine through its pyridoxal phosphate cofactor; CO(2) is released and the remaining methylamine moiety is then transferred to the lipoamide cofactor of the H protein. The chain is Glycine dehydrogenase (decarboxylating) from Neisseria meningitidis serogroup A / serotype 4A (strain DSM 15465 / Z2491).